The chain runs to 39 residues: Cytochrome b559 subunit beta (39 aa).

Residues 14 to 30 (WLAIHGLAVPTVSFLGS) traverse the membrane as a helical segment. His18 provides a ligand contact to heme.

The protein belongs to the PsbE/PsbF family. Heterodimer of an alpha subunit and a beta subunit. PSII is composed of 1 copy each of membrane proteins PsbA, PsbB, PsbC, PsbD, PsbE, PsbF, PsbH, PsbI, PsbJ, PsbK, PsbL, PsbM, PsbT, PsbX, PsbY, PsbZ, Psb30/Ycf12, at least 3 peripheral proteins of the oxygen-evolving complex and a large number of cofactors. It forms dimeric complexes. Requires heme b as cofactor.

It is found in the plastid. It localises to the chloroplast thylakoid membrane. In terms of biological role, this b-type cytochrome is tightly associated with the reaction center of photosystem II (PSII). PSII is a light-driven water:plastoquinone oxidoreductase that uses light energy to abstract electrons from H(2)O, generating O(2) and a proton gradient subsequently used for ATP formation. It consists of a core antenna complex that captures photons, and an electron transfer chain that converts photonic excitation into a charge separation. This is Cytochrome b559 subunit beta from Allium textile (Textile onion).